Consider the following 292-residue polypeptide: Ribosomal RNA small subunit methyltransferase A (292 aa).

S-adenosyl-L-methionine contacts are provided by asparagine 46, leucine 48, glycine 73, glutamate 94, aspartate 118, and asparagine 136.

It belongs to the class I-like SAM-binding methyltransferase superfamily. rRNA adenine N(6)-methyltransferase family. RsmA subfamily.

The protein resides in the cytoplasm. The catalysed reaction is adenosine(1518)/adenosine(1519) in 16S rRNA + 4 S-adenosyl-L-methionine = N(6)-dimethyladenosine(1518)/N(6)-dimethyladenosine(1519) in 16S rRNA + 4 S-adenosyl-L-homocysteine + 4 H(+). In terms of biological role, specifically dimethylates two adjacent adenosines (A1518 and A1519) in the loop of a conserved hairpin near the 3'-end of 16S rRNA in the 30S particle. May play a critical role in biogenesis of 30S subunits. This is Ribosomal RNA small subunit methyltransferase A from Deinococcus radiodurans (strain ATCC 13939 / DSM 20539 / JCM 16871 / CCUG 27074 / LMG 4051 / NBRC 15346 / NCIMB 9279 / VKM B-1422 / R1).